Consider the following 122-residue polypeptide: Large ribosomal subunit protein uL14 (122 aa).

It belongs to the universal ribosomal protein uL14 family. In terms of assembly, part of the 50S ribosomal subunit. Forms a cluster with proteins L3 and L19. In the 70S ribosome, L14 and L19 interact and together make contacts with the 16S rRNA in bridges B5 and B8. Interacts with ribosomal silencing factor RsfS, which may inhibit ribosomal subunit association.

Binds to 23S rRNA. Forms part of two intersubunit bridges in the 70S ribosome. This is Large ribosomal subunit protein uL14 from Treponema pallidum (strain Nichols).